A 564-amino-acid chain; its full sequence is Multidrug resistance protein 1 (564 aa).

Over 1–115 (MHYRFLRDSF…NPQNWPTLQK (115 aa)) the chain is Cytoplasmic. Residues 60-101 (IDNQGEPNSSQSSSSNNTIVDNNNNNDNDVDGDKIVVTWDGD) form a disordered region. Over residues 67–86 (NSSQSSSSNNTIVDNNNNND) the composition is skewed to low complexity. The helical transmembrane segment at 116-136 (AFFIFQISFLTTSVYMGSAVY) threads the bilayer. At 137–151 (TPGIEELMHDFGIGR) the chain is on the extracellular side. The chain crosses the membrane as a helical span at residues 152–172 (VVATLPLTLFVIGYGVGPLVF). Residues 173 to 183 (SPMSENAIFGR) lie on the Cytoplasmic side of the membrane. A helical transmembrane segment spans residues 184–204 (TSIYIITLFLFVILQIPTALV). At 205 to 206 (NN) the chain is on the extracellular side. The chain crosses the membrane as a helical span at residues 207-227 (IAGLCILRFLGGFFASPCLAT). Residues 228-242 (GGASVADVVKFWNLP) lie on the Cytoplasmic side of the membrane. Residues 243–263 (VGLAAWSLGAVCGPSFGPFFG) form a helical membrane-spanning segment. Residues 264–273 (SILTVKASWR) lie on the Extracellular side of the membrane. Residues 274–294 (WTFWFMCIISGFSFVMLCFTL) form a helical membrane-spanning segment. Over 295–350 (PETFGKTLLYRKAKRLRAITGNDRITSEGEVENSKMTSHELIIDTLWRPLEITVME) the chain is Cytoplasmic. A helical membrane pass occupies residues 351–371 (PVVLLINIYIAMVYSILYLFF). The Extracellular segment spans residues 372-390 (EVFPIYFVGVKHFTLVELG). The chain crosses the membrane as a helical span at residues 391 to 411 (TTYMSIVIGIVIAAFIYIPVI). Over 412-428 (RQKFTKPILRQEQVFPE) the chain is Cytoplasmic. Residues 429–449 (VFIPIAIVGGILLTSGLFIFG) traverse the membrane as a helical segment. Over 450–455 (WSANRT) the chain is Extracellular. The N-linked (GlcNAc...) asparagine glycan is linked to Asn-453. A helical transmembrane segment spans residues 456–476 (THWVGPLFGAATTASGAFLIF). Residues 477–503 (QTLFNFMGASFKPHYIASVFASNDLFR) are Cytoplasmic-facing. A helical membrane pass occupies residues 504–524 (SVIASVFPLFGAPLFDNLATP). Residues 525 to 528 (EYPV) are Extracellular-facing. Residues 529–549 (AWGSSVLGFITLVMIAIPVLF) traverse the membrane as a helical segment. The Cytoplasmic portion of the chain corresponds to 550 to 564 (YLNGPKLRARSKYAN).

The protein belongs to the major facilitator superfamily. CAR1 family.

Its subcellular location is the cell membrane. Its function is as follows. Plasma membrane multidrug efflux pump that confers resistance to numerous chemicals including azoles such as fluconazole, voriconazole, and benztriazoles, as well as to benomyl, cycloheximide, methotrexate, 4-nitroquinoline-N-oxide, sulfometuron methyl, cerulenin, and brefeldin A. The protein is Multidrug resistance protein 1 of Candida albicans (strain SC5314 / ATCC MYA-2876) (Yeast).